A 556-amino-acid polypeptide reads, in one-letter code: Formate--tetrahydrofolate ligase (556 aa).

65 to 72 (TPAGEGKS) is a binding site for ATP.

Belongs to the formate--tetrahydrofolate ligase family.

It catalyses the reaction (6S)-5,6,7,8-tetrahydrofolate + formate + ATP = (6R)-10-formyltetrahydrofolate + ADP + phosphate. It participates in one-carbon metabolism; tetrahydrofolate interconversion. The protein is Formate--tetrahydrofolate ligase of Clostridium novyi (strain NT).